A 253-amino-acid polypeptide reads, in one-letter code: Pro-opiomelanocortin A (253 aa).

Residues 1–21 form the signal peptide; that stretch reads MLCPAWLLAVAVVGVVRGVKG. Gln22 carries the pyrrolidone carboxylic acid modification. 2 disulfide bridges follow: Cys23-Cys45 and Cys29-Cys41. At Ser104 the chain carries N-acetylserine; in Corticotropin. Val116 is subject to Valine amide. The segment at 228–253 is disordered; that stretch reads QKREQWGREEGEEKRALGERKYHFQG. Glutamine amide; partial is present on Gln252.

This sequence belongs to the POMC family. In terms of processing, specific enzymatic cleavages at paired basic residues yield the different active peptides. Acetylation of beta-endorphin occurs in a tissue-specific manner. C-terminal peptide 1 and C-terminal peptide 2 are detected in the anterior part of the nucleus lateralis tuberis of hypothalamus, in dorsal hypothalamus, thalamus, telencephalon, optic tectum and medulla oblongata (at protein level). Expressed in pituitary and hypothalamus of adult diploid animals, and hypothalamus of triploid and ovulated female trout.

The protein resides in the secreted. In terms of biological role, stimulates the adrenal glands to release cortisol. Melanocyte-stimulating hormone alpha: Anorexigenic peptide. Increases the pigmentation of skin by increasing melanin production in melanocytes. Its function is as follows. Melanocyte-stimulating hormone beta: Increases the pigmentation of skin by increasing melanin production in melanocytes. Functionally, beta-endorphin: Endogenous orexigenic opiate. In terms of biological role, endogenous opiate. The protein is Pro-opiomelanocortin A (pomca) of Oncorhynchus mykiss (Rainbow trout).